The following is a 246-amino-acid chain: Protein-lysine N-methyltransferase EFM6 (246 aa).

S-adenosyl-L-methionine-binding positions include W51, 87–89 (GSG), D115, W143, and A169.

Belongs to the class I-like SAM-binding methyltransferase superfamily. METTL21 family. EFM6 subfamily.

The protein localises to the cytoplasm. S-adenosyl-L-methionine-dependent protein-lysine N-methyltransferase that methylates elongation factor 1-alpha (TEF1 and TEF2) at 'Lys-390'. The chain is Protein-lysine N-methyltransferase EFM6 from Saccharomyces cerevisiae (strain ATCC 204508 / S288c) (Baker's yeast).